We begin with the raw amino-acid sequence, 50 residues long: Cytochrome c-555 (50 aa).

Residues cysteine 7, cysteine 10, histidine 11, and methionine 25 each contribute to the heme site.

Binds 1 heme group per subunit.

It localises to the cell membrane. The polypeptide is Cytochrome c-555 (Schinkia azotoformans (Bacillus azotoformans)).